Here is a 78-residue protein sequence, read N- to C-terminus: Acyl carrier protein (78 aa).

A Carrier domain is found at 2–77 (SDIAERVKKI…DAVKFIEKAQ (76 aa)). S37 carries the post-translational modification O-(pantetheine 4'-phosphoryl)serine.

This sequence belongs to the acyl carrier protein (ACP) family. In terms of processing, 4'-phosphopantetheine is transferred from CoA to a specific serine of apo-ACP by AcpS. This modification is essential for activity because fatty acids are bound in thioester linkage to the sulfhydryl of the prosthetic group.

The protein resides in the cytoplasm. The protein operates within lipid metabolism; fatty acid biosynthesis. Carrier of the growing fatty acid chain in fatty acid biosynthesis. The chain is Acyl carrier protein from Rhizobium etli (strain CIAT 652).